A 455-amino-acid polypeptide reads, in one-letter code: J protein JJJ2 (455 aa).

Positions 12 to 76 (TYYSILGVPT…QLRAEYDKKL (65 aa)) constitute a J domain. The disordered stretch occupies residues 104–241 (RNSKPYEQQP…RKKSEKKATP (138 aa)). Low complexity predominate over residues 133–144 (NSNPHNENSSNN). The span at 156–168 (TLSKDSEDKHGTD) shows a compositional bias: basic and acidic residues.

The protein resides in the cytoplasm. It localises to the nucleus. This is J protein JJJ2 (JJJ2) from Candida glabrata (strain ATCC 2001 / BCRC 20586 / JCM 3761 / NBRC 0622 / NRRL Y-65 / CBS 138) (Yeast).